Here is a 73-residue protein sequence, read N- to C-terminus: Translation initiation factor IF-1 (73 aa).

One can recognise an S1-like domain in the interval 1–72; that stretch reads MPKKDAIEVE…TRGRVTYRFK (72 aa).

The protein belongs to the IF-1 family. As to quaternary structure, component of the 30S ribosomal translation pre-initiation complex which assembles on the 30S ribosome in the order IF-2 and IF-3, IF-1 and N-formylmethionyl-tRNA(fMet); mRNA recruitment can occur at any time during PIC assembly.

The protein localises to the cytoplasm. Its function is as follows. One of the essential components for the initiation of protein synthesis. Stabilizes the binding of IF-2 and IF-3 on the 30S subunit to which N-formylmethionyl-tRNA(fMet) subsequently binds. Helps modulate mRNA selection, yielding the 30S pre-initiation complex (PIC). Upon addition of the 50S ribosomal subunit IF-1, IF-2 and IF-3 are released leaving the mature 70S translation initiation complex. This is Translation initiation factor IF-1 from Dehalococcoides mccartyi (strain ATCC BAA-2266 / KCTC 15142 / 195) (Dehalococcoides ethenogenes (strain 195)).